A 327-amino-acid polypeptide reads, in one-letter code: MHPQQLVVSWFSLVLLASPIVAIWELEKNVYIVELDWYPDAPGETVVLTCDTPEEDGITWTSDQSSEVLGSGKTLTIQVKEFGDAGQYTCHKGGEALSRSLLLLHKKEDGIWSTDILKDQKEPKAKSFLKCEAKDYSGHFTCWWLTAISTDLKFSVKSSRGSSDPRGVTCGAASLSAEKVSVDHREYNKYTVECQEGSTCPAAEESLLIEVVVEAVHKLKYENYTSSFFIRDIIKPDPPKNLQLRPLKNSRQVEVSWEYPDTWSTPHSYFSLTFCVQVQGKNKREKKLFMDQTSAKVTCHKDANVRVQARDRYYSSFWSEWASVSCS.

The N-terminal stretch at 1 to 22 (MHPQQLVVSWFSLVLLASPIVA) is a signal peptide. One can recognise an Ig-like C2-type domain in the interval 23 to 106 (IWELEKNVYI…LSRSLLLLHK (84 aa)). A disulfide bond links Cys-50 and Cys-90. Asn-223 is a glycosylation site (N-linked (GlcNAc...) asparagine). Residues 238 to 327 (PPKNLQLRPL…WSEWASVSCS (90 aa)) form the Fibronectin type-III domain.

Belongs to the IL-12B family. As to quaternary structure, heterodimer with IL12A; disulfide-linked. The heterodimer is known as interleukin IL-12. Heterodimer with IL23A; disulfide-linked. The heterodimer is known as interleukin IL-23. Also secreted as a monomer. Interacts with NBR1; this interaction promotes IL-12 secretion.

The protein localises to the secreted. Cytokine that can act as a growth factor for activated T and NK cells, enhance the lytic activity of NK/lymphokine-activated killer cells, and stimulate the production of IFN-gamma by resting PBMC. The protein is Interleukin-12 subunit beta (IL12B) of Bubalus carabanensis (Swamp type water buffalo).